Consider the following 609-residue polypeptide: Copper resistance protein A (609 aa).

A signal peptide (tat-type signal) is located at residues 1-32 (MESRTSRRTFVKGLAAAGVLGGLGLWRSPSWA). The Cu cation site is built by His-100, His-102, His-142, and His-144. 5 repeat units span residues 367 to 374 (DDMGMGGM), 375 to 382 (DHGSMDGM), 408 to 415 (DHSKMSTM), 419 to 426 (DHGAMSGM), and 427 to 434 (DHGAMGGM). Residues 367–434 (DDMGMGGMDH…GMDHGAMGGM (68 aa)) are 5 X 8 AA tandem repeats of D-H-X-X-M-X-G-M. The Cu cation site is built by His-542, His-545, His-547, His-590, Cys-591, His-592, His-596, and Met-601.

This sequence belongs to the multicopper oxidase family. CopA subfamily. Post-translationally, predicted to be exported by the Tat system. The position of the signal peptide cleavage has been experimentally proven.

It is found in the periplasm. In terms of biological role, mediates copper resistance by sequestration of copper in the periplasm along with the copper-binding protein CopC. May have oxidase activity. The chain is Copper resistance protein A (copA) from Pseudomonas syringae pv. tomato.